We begin with the raw amino-acid sequence, 205 residues long: MLERGLSELGSDAGGDQRERLLRFLELLRKWNRVYSLTAIEDPCEGVRLHLLDSLSIASFLHGRRVLDVGTGPGLPGIPLAIVQPERRFVLLDCNAKKIRFVRQAVIELGLANVVPVQARIESFTDAEGFDCVLARAYASLAEIWTDAAPLLRTGGTVLALKGRRPEAELGDLPAGVAVGIHRLRVPGVEAERHLAELKPTGQDS.

S-adenosyl-L-methionine contacts are provided by residues Gly-70, Leu-75, Ile-121–Glu-122, and Arg-136.

This sequence belongs to the methyltransferase superfamily. RNA methyltransferase RsmG family.

It localises to the cytoplasm. It carries out the reaction guanosine(527) in 16S rRNA + S-adenosyl-L-methionine = N(7)-methylguanosine(527) in 16S rRNA + S-adenosyl-L-homocysteine. Functionally, specifically methylates the N7 position of guanine in position 527 of 16S rRNA. This chain is Ribosomal RNA small subunit methyltransferase G, found in Methylococcus capsulatus (strain ATCC 33009 / NCIMB 11132 / Bath).